Consider the following 549-residue polypeptide: Probable protein kinase UbiB (549 aa).

The Protein kinase domain maps to 123-501; sequence DFDNTPLASA…QQKAHKSNYL (379 aa). ATP is bound by residues 129 to 137 and lysine 152; that span reads LASASISQV. Aspartate 287 serves as the catalytic Proton acceptor. 2 helical membrane passes run 498–518 and 520–540; these read SNYLLITSAVLVICGTILFNQ and ATLWASYGSITVGVVLWLLGW.

It belongs to the ABC1 family. UbiB subfamily.

The protein localises to the cell inner membrane. The protein operates within cofactor biosynthesis; ubiquinone biosynthesis [regulation]. Functionally, is probably a protein kinase regulator of UbiI activity which is involved in aerobic coenzyme Q (ubiquinone) biosynthesis. This is Probable protein kinase UbiB from Shewanella woodyi (strain ATCC 51908 / MS32).